Reading from the N-terminus, the 265-residue chain is Mlc titration factor A (265 aa).

Zn(2+) contacts are provided by H111, H148, H152, and E211.

Belongs to the MtfA family. In terms of assembly, interacts with Mlc. Zn(2+) is required as a cofactor.

It localises to the cytoplasm. Functionally, involved in the modulation of the activity of the glucose-phosphotransferase system (glucose-PTS). Interacts with the transcriptional repressor Mlc, preventing its interaction with DNA and leading to the modulation of expression of genes regulated by Mlc, including ptsG, which encodes the PTS system glucose-specific EIICB component. Shows zinc-dependent metallopeptidase activity. The chain is Mlc titration factor A from Escherichia fergusonii (strain ATCC 35469 / DSM 13698 / CCUG 18766 / IAM 14443 / JCM 21226 / LMG 7866 / NBRC 102419 / NCTC 12128 / CDC 0568-73).